Consider the following 293-residue polypeptide: Sodium-type flagellar protein MotY (293 aa).

The first 21 residues, 1 to 21, serve as a signal peptide directing secretion; the sequence is MNKWLITSGVMLSLLSANSYA. In terms of domain architecture, OmpA-like spans 175-292; that stretch reads YSFEDIAFTI…RVVISLGRTQ (118 aa).

The protein resides in the cell membrane. Functionally, may play the role of a stator in the sodium flagellar motor, stabilizing the force-generating unit through direct interaction with the cell wall. The sequence is that of Sodium-type flagellar protein MotY from Vibrio parahaemolyticus serotype O3:K6 (strain RIMD 2210633).